The following is a 749-amino-acid chain: DNA topoisomerase 1 (749 aa).

A disordered region spans residues 1–110 (MSDSEDVALS…PKKEDSVETD (110 aa)). Residues 62–75 (LSKEKVNNKVKDEL) show a composition bias toward basic and acidic residues. Over residues 79-94 (PVTPKKTPKISKTPVS) the composition is skewed to low complexity. Over residues 101–110 (PKKEDSVETD) the composition is skewed to basic and acidic residues. Interaction with DNA stretches follow at residues 338–339 (KY), 401–406 (RAGGEK), and 493–495 (TAK). Residues 345–749 (NSSIKGISDM…IESTDENWRF (405 aa)) enclose the Topo IB-type catalytic domain. Tyr707 serves as the catalytic O-(3'-phospho-DNA)-tyrosine intermediate.

It belongs to the type IB topoisomerase family.

The protein resides in the nucleus. The protein localises to the nucleolus. Its subcellular location is the nucleoplasm. The catalysed reaction is ATP-independent breakage of single-stranded DNA, followed by passage and rejoining.. Functionally, releases the supercoiling and torsional tension of DNA introduced during the DNA replication and transcription by transiently cleaving and rejoining one strand of the DNA duplex. Introduces a single-strand break via transesterification at the specific target site 5'-[CT]CCTTp site in duplex DNA. The scissile phosphodiester is attacked by the catalytic tyrosine of the enzyme, resulting in the formation of a DNA-(3'-phosphotyrosyl)-enzyme intermediate and the expulsion of a 5'-OH DNA strand. The free DNA strand then undergoes passage around the unbroken strand thus removing DNA supercoils. Finally, in the religation step, the DNA 5'-OH attacks the covalent intermediate to expel the active-site tyrosine and restore the DNA phosphodiester backbone. In Candidozyma auris (Yeast), this protein is DNA topoisomerase 1 (TOP1).